The chain runs to 254 residues: Ribosomal RNA large subunit methyltransferase E (254 aa).

The interval 1 to 28 (MTTPPRGPDGRPLKVRVKKSRGRTTSSQ) is disordered. Positions 13–22 (LKVRVKKSRG) are enriched in basic residues. S-adenosyl-L-methionine contacts are provided by G80, W82, D103, D119, and D143. The active-site Proton acceptor is K183. Residues 231 to 254 (DRAETDDAGTDGTGTAEAQAPRDQ) form a disordered region.

The protein belongs to the class I-like SAM-binding methyltransferase superfamily. RNA methyltransferase RlmE family.

Its subcellular location is the cytoplasm. The enzyme catalyses uridine(2552) in 23S rRNA + S-adenosyl-L-methionine = 2'-O-methyluridine(2552) in 23S rRNA + S-adenosyl-L-homocysteine + H(+). Functionally, specifically methylates the uridine in position 2552 of 23S rRNA at the 2'-O position of the ribose in the fully assembled 50S ribosomal subunit. In Xanthobacter autotrophicus (strain ATCC BAA-1158 / Py2), this protein is Ribosomal RNA large subunit methyltransferase E.